The following is a 417-amino-acid chain: Probable pectate lyase 20 (417 aa).

An N-terminal signal peptide occupies residues 1 to 25 (MAVTQILVVFASALLLSMFFTGVDS). Asn-29 and Asn-53 each carry an N-linked (GlcNAc...) asparagine glycan. 3 residues coordinate Ca(2+): Asp-215, Asp-239, and Asp-243. Arg-295 is a catalytic residue.

The protein belongs to the polysaccharide lyase 1 family. Requires Ca(2+) as cofactor.

It catalyses the reaction Eliminative cleavage of (1-&gt;4)-alpha-D-galacturonan to give oligosaccharides with 4-deoxy-alpha-D-galact-4-enuronosyl groups at their non-reducing ends.. It functions in the pathway glycan metabolism; pectin degradation; 2-dehydro-3-deoxy-D-gluconate from pectin: step 2/5. This chain is Probable pectate lyase 20, found in Arabidopsis thaliana (Mouse-ear cress).